The chain runs to 215 residues: Chaperone protein TorD (215 aa).

It belongs to the TorD/DmsD family. TorD subfamily.

The protein resides in the cytoplasm. Involved in the biogenesis of TorA. Acts on TorA before the insertion of the molybdenum cofactor and, as a result, probably favors a conformation of the apoenzyme that is competent for acquiring the cofactor. This is Chaperone protein TorD from Vibrio atlanticus (strain LGP32) (Vibrio splendidus (strain Mel32)).